The chain runs to 326 residues: ATP-dependent 6-phosphofructokinase (326 aa).

Residue Gly-14 participates in ATP binding. 24–28 lines the ADP pocket; the sequence is RAVVR. ATP is bound by residues 75 to 76 and 105 to 108; these read RF and GNGS. Asn-106 contributes to the Mg(2+) binding site. 129-131 contributes to the substrate binding site; sequence TID. The active-site Proton acceptor is Asp-131. Arg-158 is a binding site for ADP. Residues Arg-166 and 173–175 each bind substrate; that span reads MGR. ADP contacts are provided by residues 189–191, Lys-215, and 216–218; these read GAE and KSA. Substrate-binding positions include Glu-225, Arg-248, and 254 to 257; that span reads HTQR.

It belongs to the phosphofructokinase type A (PFKA) family. ATP-dependent PFK group I subfamily. Prokaryotic clade 'B1' sub-subfamily. In terms of assembly, homotetramer. Mg(2+) is required as a cofactor.

The protein localises to the cytoplasm. It carries out the reaction beta-D-fructose 6-phosphate + ATP = beta-D-fructose 1,6-bisphosphate + ADP + H(+). It participates in carbohydrate degradation; glycolysis; D-glyceraldehyde 3-phosphate and glycerone phosphate from D-glucose: step 3/4. Allosterically activated by ADP and other diphosphonucleosides, and allosterically inhibited by phosphoenolpyruvate. Functionally, catalyzes the phosphorylation of D-fructose 6-phosphate to fructose 1,6-bisphosphate by ATP, the first committing step of glycolysis. The protein is ATP-dependent 6-phosphofructokinase of Coxiella burnetii (strain RSA 493 / Nine Mile phase I).